A 798-amino-acid chain; its full sequence is Bromodomain-containing protein 2 (798 aa).

At Met-1 the chain carries N-acetylmethionine. Residues 1–21 (MLQNVTPHKLPGEGNAGLLGL) form a disordered region. Residue Thr-6 is modified to Phosphothreonine. Position 36 is a phosphoserine (Ser-36). Positions 53–72 (LQLAPANPPPPEVSNPKKPG) are disordered. The 107-residue stretch at 73–179 (RVTNQLQYLH…KIFLQKVASM (107 aa)) folds into the Bromo 1 domain. The a protein site is built by Asp-111, Tyr-154, Asn-155, Lys-156, Asp-159, and Asp-160. 3 disordered regions span residues 267–348 (PPAQ…LSEQ), 454–645 (DEPL…YDEK), and 736–798 (KRLQ…SDSG). Over residues 284–297 (TTTPTPTAILAPGS) the composition is skewed to low complexity. Residues Ser-297, Ser-300, and Ser-304 each carry the phosphoserine modification. Over residues 315-331 (MRRESGRPIKPPRKDLP) the composition is skewed to basic and acidic residues. The Bromo 2 domain occupies 343 to 452 (GKLSEQLKHC…DVFEFRYAKM (110 aa)). Positions 480–512 (SSEESSSESSSEEEEEEEEDEDEEESESSDSEE) are enriched in acidic residues. The span at 542-564 (KPKRKREKKEKKKKRKAEKHRGR) shows a compositional bias: basic residues. Residues 553-557 (KKKRK) carry the Nuclear localization signal motif. Residues 630–712 (DSEEEEESRP…SCLRKKPRKP (83 aa)) enclose the NET domain. At Ser-631 the chain carries Phosphoserine. The segment covering 772–792 (SASSSSSDSSSSSSSSSSSDT) has biased composition (low complexity).

Belongs to the BET family. As to quaternary structure, homodimer. Interacts with E2F1. Interacts with (acetylated) STAT3; promoting STAT3 recruitment to chromatin. Interacts with CTCF; promoting BRD2 recruitment to chromatin. In terms of tissue distribution, predominantly expressed in the testis, followed by ovary, placenta, embryo and to a lower extent in somatic tissues.

The protein resides in the nucleus. It localises to the chromosome. Chromatin reader protein that specifically recognizes and binds histone H4 acetylated at 'Lys-5' and 'Lys-12' (H4K5ac and H4K12ac, respectively), thereby controlling gene expression and remodeling chromatin structures. Recruits transcription factors and coactivators to target gene sites, and activates RNA polymerase II machinery for transcriptional elongation. Plays a key role in genome compartmentalization via its association with CTCF and cohesin: recruited to chromatin by CTCF and promotes formation of topologically associating domains (TADs) via its ability to bind acetylated histones, contributing to CTCF boundary formation and enhancer insulation. Also recognizes and binds acetylated non-histone proteins, such as STAT3. Involved in inflammatory response by regulating differentiation of naive CD4(+) T-cells into T-helper Th17: recognizes and binds STAT3 acetylated at 'Lys-87', promoting STAT3 recruitment to chromatin. In addition to acetylated lysines, also recognizes and binds lysine residues on histones that are both methylated and acetylated on the same side chain to form N6-acetyl-N6-methyllysine (Kacme), an epigenetic mark of active chromatin associated with increased transcriptional initiation. Specifically binds histone H4 acetyl-methylated at 'Lys-5' and 'Lys-12' (H4K5acme and H4K12acme, respectively). In Mus musculus (Mouse), this protein is Bromodomain-containing protein 2.